Consider the following 381-residue polypeptide: Guanine nucleotide-binding protein G(olf) subunit alpha (381 aa).

Residues Met-1–Asn-25 are disordered. The N-palmitoyl glycine moiety is linked to residue Gly-2. The S-palmitoyl cysteine moiety is linked to residue Cys-3. The span at Thr-10–Asn-25 shows a compositional bias: basic and acidic residues. The G-alpha domain occupies Ala-41 to Leu-381. The G1 motif stretch occupies residues Arg-44–Thr-57. Positions 52, 53, 54, 55, 56, and 57 each coordinate GTP. Ser-56 is a binding site for Mg(2+). Residue Thr-178 is modified to Phosphothreonine. The segment at Asp-183 to Thr-191 is G2 motif. GTP-binding residues include Leu-185 and Arg-186. ADP-ribosylarginine; by cholera toxin is present on Arg-188. A GTP-binding site is contributed by Thr-191. Mg(2+)-binding residues include Thr-191 and Asp-210. The segment at Phe-206–Arg-215 is G3 motif. The GTP site is built by Gly-213, Asn-279, Lys-280, Asp-282, and Ala-353. The G4 motif stretch occupies residues Ile-275–Asp-282. The segment at Thr-351–Thr-356 is G5 motif.

This sequence belongs to the G-alpha family. G(s) subfamily. In terms of assembly, g proteins are composed of 3 units; alpha, beta and gamma. The alpha chain contains the guanine nucleotide binding site. Interacts with GAS2L2. Interacts (GDP-bound form) with RIC8B (via C-terminus); promoting GNAL folding and association with the plasma membrane. Detected in olfactory neuroepithelium, brain, testis, and to a lower extent in retina, lung alveoli, spleen. Trace amounts where seen in kidney, adrenal gland and liver. Found to be expressed in all the insulinomas examined.

The protein localises to the cell membrane. The enzyme catalyses GTP + H2O = GDP + phosphate + H(+). In terms of biological role, guanine nucleotide-binding protein (G protein) involved as transducer in olfactory signal transduction controlled by G protein-coupled receptors (GPCRs). Contains the guanine nucleotide binding site and alternates between an active, GTP-bound state and an inactive, GDP-bound state. Signaling by an activated GPCR promotes GDP release and GTP binding. The alpha subunit has a low GTPase activity that converts bound GTP to GDP, thereby terminating the signal. Both GDP release and GTP hydrolysis are modulated by numerous regulatory proteins. GNAL/G(olf) alpha specifically mediates olfactory signal transduction within the olfactory neuroepithelium and the basal ganglia following GPCRs activation. Acts by promoting the specific activation of adenylyl cyclase ADCY3, resulting in increased levels of the signaling molecule cAMP. This is Guanine nucleotide-binding protein G(olf) subunit alpha from Homo sapiens (Human).